The sequence spans 397 residues: MIERLKKVSLPALSAFILFCSCHYGRILGVICFDIGQRTSDDSLVVRNRHQFKWFCLSCRLISVTAVCCFCAPYVADIEDPYERLLQCFRLSASLICGICIIVVQVCYEKELLRMIISFLRLFRRVRRLSSLKRIGFGGKREFFLLLFKFICLVYELYSEICQLWHLPDSLSLFATLCEIFLEIGSLMIIHIGFVGYLSVAALYSEVNSFARIELRRQLRSLERPVGGPVGRKQLRIVEYRVDECISVYDEIERVGRTFHRLLELPVLIILLGKIFATTILSYEVIIRPELYARKIGMWGLVVKSFADVILLTLAVHEAVSSSRMMRRLSLENFPITDHKAWHMKWEMFLSRLNFFEFRVRPLGLFEVSNEVILLFLSSMITYFTYVVQYGIQTNRL.

At 1–12 (MIERLKKVSLPA) the chain is on the cytoplasmic side. The chain crosses the membrane as a helical span at residues 13–33 (LSAFILFCSCHYGRILGVICF). Residues 34 to 87 (DIGQRTSDDSLVVRNRHQFKWFCLSCRLISVTAVCCFCAPYVADIEDPYERLLQ) are Extracellular-facing. Residues 88-108 (CFRLSASLICGICIIVVQVCY) form a helical membrane-spanning segment. At 109 to 141 (EKELLRMIISFLRLFRRVRRLSSLKRIGFGGKR) the chain is on the cytoplasmic side. A helical membrane pass occupies residues 142-162 (EFFLLLFKFICLVYELYSEIC). Over 163–179 (QLWHLPDSLSLFATLCE) the chain is Extracellular. A helical transmembrane segment spans residues 180 to 200 (IFLEIGSLMIIHIGFVGYLSV). Residues 201 to 266 (AALYSEVNSF…RTFHRLLELP (66 aa)) are Cytoplasmic-facing. A helical membrane pass occupies residues 267 to 287 (VLIILLGKIFATTILSYEVII). Residues 288 to 295 (RPELYARK) are Extracellular-facing. The helical transmembrane segment at 296–316 (IGMWGLVVKSFADVILLTLAV) threads the bilayer. Residues 317–371 (HEAVSSSRMMRRLSLENFPITDHKAWHMKWEMFLSRLNFFEFRVRPLGLFEVSNE) lie on the Cytoplasmic side of the membrane. Residues 372-392 (VILLFLSSMITYFTYVVQYGI) traverse the membrane as a helical segment. Residues 393–397 (QTNRL) are Extracellular-facing.

It belongs to the insect chemoreceptor superfamily. Gustatory receptor (GR) family. Gr93a subfamily. As to expression, in larvae, is expressed in neurons of the posterior pharyngeal sense organ.

It is found in the cell membrane. Functionally, probable gustatory receptor which mediates acceptance or avoidance behavior, depending on its substrates. The protein is Putative gustatory receptor 93c (Gr93c) of Drosophila melanogaster (Fruit fly).